Here is a 397-residue protein sequence, read N- to C-terminus: 4-O-methyl-glucuronoyl methylesterase (397 aa).

An N-terminal signal peptide occupies residues Met-1 to Ala-18. 3 disulfide bridges follow: Cys-31–Cys-65, Cys-212–Cys-347, and Cys-244–Cys-319. The short motif at Gly-211 to Gly-216 is the GXSYXG catalytic site motif element. The active-site Nucleophile is the Ser-213. Residues Lys-217, Gln-259, Glu-267, and Trp-310 each coordinate substrate. His-346 functions as the Proton donor/acceptor in the catalytic mechanism.

It belongs to the carbohydrate esterase 15 (CE15) family.

The protein resides in the secreted. The enzyme catalyses a 4-O-methyl-alpha-D-glucuronosyl ester derivative + H2O = 4-O-methyl-alpha-D-glucuronate derivative + an alcohol + H(+). Its function is as follows. Glucuronoyl esterase which may play a significant role in biomass degradation, as it is considered to disconnect hemicellulose from lignin through the hydrolysis of the ester bond between 4-O-methyl-D-glucuronic acid residues of glucuronoxylans and aromatic alcohols of lignin. The protein is 4-O-methyl-glucuronoyl methylesterase (ge2) of Thermothelomyces thermophilus (strain ATCC 42464 / BCRC 31852 / DSM 1799) (Sporotrichum thermophile).